The sequence spans 62 residues: uncharacterized protein (62 aa).

The tract at residues 1 to 26 is disordered; sequence MGELAASANHGHSPCYPERKGTPGDL. Residues 17 to 26 are compositionally biased toward basic and acidic residues; sequence PERKGTPGDL.

This is an uncharacterized protein from Homo sapiens (Human).